A 291-amino-acid chain; its full sequence is uncharacterized protein (291 aa).

One can recognise an HTH araC/xylS-type domain in the interval 191–289; sequence KQMLNWIHLH…NMTPLSYKKM (99 aa). DNA-binding regions (H-T-H motif) lie at residues 208 to 229 and 256 to 279; these read EDIA…KRML and VTEV…QQAM.

This is an uncharacterized protein from Bacillus subtilis (strain 168).